The chain runs to 212 residues: Response regulator SsrB (212 aa).

A required for prevention of DNA binding in absence of phosphorylation and for full stimulation of activity by acidic pH region spans residues 1-138; that stretch reads MKEYKILLVD…PTLNREAILA (138 aa). In terms of domain architecture, Response regulatory spans 5-121; it reads KILLVDDHEI…VLLAALQTVA (117 aa). The residue at position 56 (Asp-56) is a 4-aspartylphosphate. Residues 143-208 form the HTH luxR-type domain; it reads DTTNHQLLTL…ELLNCARRMR (66 aa). A DNA-binding region (H-T-H motif) is located at residues 167–186; the sequence is NHGISEKLHISIKTVETHRM. An S-nitrosocysteine modification is found at Cys-203.

Homodimer; disulfide-linked; dimerizes upon DNA-binding. SsrB phosphorylated on Asp-56 activates the expression of virulence genes whereas the unphosphorylated form controls biofilm formation. Independently of SsrA, can be phosphorylated by small inorganic phosphate donors (such as acetyl phosphate or phosphoramidate). In terms of processing, disulfide bond formation at Cys-203 is not required for dimerization. Post-translationally, cys-203 may serve as a redox sensor that is nitrosylated in presence of reactive nitrogen species (RNS) generated by the host, the modification modulates its DNA-binding activity. Cys-203 is relatively resistant to oxidation by hydrogen peroxide.

Its subcellular location is the cytoplasm. Member of the two-component regulatory system SsrA/SsrB (SpiR/SsrB) that is required for intracellular proliferation and systemic dissemination within the host. When inside acidic Salmonella-containing vesicles (SCV) within host cells the SsrA sensor kinase autophosphorylates and the phosphoryl group is transferred to the response regulator SsrB; phosphorylated SsrB activates the expression of genes encoding virulence proteins, including pathogenicity island 2 (SPI2) and other horizontally acquired genes, but also ancestral genes; it can stimulate gene expression both by recruiting RNA polymerase and by antagonizing the action of the transcriptional repressor hns (H-NS). Can also act independently of sensor kinase ssrA to support the dormant carrier state by directing the transcription of factors required for biofilm formation. DNA-binding is stimulated by acidic pH conditions, and binding promotes bending of DNA both upstream and downstream of binding sites. Binds a degenerate 18-basepair palindromic sequence with a 7-4-7 internal organization, and regulates gene expression from 86 operons. When phosphorylated, activates the transcription of the ABC transporter complex dalSTUV, which helps protect the organism from oxidative killing by host neutrophils. Binds the phoP promoter to stimulate expression in acidic pH conditions. Antagonizes hns to activate the transcription of ugtL. Following invasion of host cells, binds the hilD and hilA regulatory regions to repress their transcription and consequently to repress transcription of pathogenicity island 1 (SPI1) encoding genes involved in host cell invasion. Binds the promoters of the flagellar master regulators flhD and flhC to repress their expression and consequently to suppress flagellar motility and promote evasion of the host inflammasome during infection of host cells. Activates expression of sseI/srfH, sifA, sifB, sseJ and regulates its own expression. When unphosphorylated, relieves the hns-mediated repression of master biofilm regulator csgD by binding and bending the csgD regulatory region. May act as early as in the lumen of the host small intestine, to activate the expression of virulence proteins prior to invasion of host cells. The protein is Response regulator SsrB of Salmonella typhimurium (strain LT2 / SGSC1412 / ATCC 700720).